The sequence spans 558 residues: Poly(A) polymerase PAPalpha (558 aa).

Positions 1 to 17 are enriched in polar residues; the sequence is MNTKTYGVTEPISTNGP. The disordered stretch occupies residues 1–20; that stretch reads MNTKTYGVTEPISTNGPTPK. ATP is bound by residues 86-88, 99-101, Asp153, Lys214, Tyr223, and 232-233; these read FGS, DID, and GV. Mg(2+)-binding residues include Asp99, Asp101, and Asp153. The segment at 516–558 is disordered; the sequence is VYEDGEERPKKSGKKRKKVIKEDGQKRVRNESPASSASVNGSS. Over residues 535-545 the composition is skewed to basic and acidic residues; it reads IKEDGQKRVRN. A compositionally biased stretch (low complexity) spans 547–558; the sequence is SPASSASVNGSS.

The protein belongs to the poly(A) polymerase family. The cofactor is Mg(2+). Mn(2+) is required as a cofactor.

The protein localises to the nucleus. It catalyses the reaction RNA(n) + ATP = RNA(n)-3'-adenine ribonucleotide + diphosphate. Its function is as follows. Polymerase that creates the 3'-poly(A) tail of mRNA's. May acquire specificity through interaction with a cleavage and polyadenylation factor. The protein is Poly(A) polymerase PAPalpha (PAPALPHA) of Candida albicans (strain SC5314 / ATCC MYA-2876) (Yeast).